The chain runs to 185 residues: Elongation factor P (185 aa).

It belongs to the elongation factor P family.

It is found in the cytoplasm. The protein operates within protein biosynthesis; polypeptide chain elongation. In terms of biological role, involved in peptide bond synthesis. Stimulates efficient translation and peptide-bond synthesis on native or reconstituted 70S ribosomes in vitro. Probably functions indirectly by altering the affinity of the ribosome for aminoacyl-tRNA, thus increasing their reactivity as acceptors for peptidyl transferase. This is Elongation factor P from Clostridium kluyveri (strain ATCC 8527 / DSM 555 / NBRC 12016 / NCIMB 10680 / K1).